A 354-amino-acid polypeptide reads, in one-letter code: MLRMRTRSASWMELPRRVVAGAGALANIGDVCVDLRLSGRALVITGPQTRSVAGDNLAASLTDCGFEADVVITRDPRPAEVDRVKSFALDYKADFLIGAGGGRSIDIAKLAAYHLDIPYLSVPTAASHDGIASAMASLNMDGETKSIPTRAPLAIIADTGIISKAPPRLMSAGCGDIISNYTAILDWRLAKRLKCEDYSEYAAALSSMTAKMVVDMAPSIKPGHEPSAKVVVQALISSGVAMSIAGSSRPASGSEHMFAHALNRIAPGRGLHGELCGIGTIIMMYLHGGDWRMIREALKVLGAPASAHELNIPEDVVVEALTQAHKIRPERYTILGNGLTEAAARAAAETTKVI.

Residues Gly-102–Asp-106 and Thr-124–Ser-127 each bind NAD(+). Asp-129 contributes to the substrate binding site. Ser-133 serves as a coordination point for NAD(+). Asp-176 serves as a coordination point for substrate. Asp-176 and His-256 together coordinate Zn(2+). His-260 is a binding site for substrate. His-272 serves as a coordination point for Zn(2+).

This sequence belongs to the glycerol-1-phosphate dehydrogenase family. It depends on Zn(2+) as a cofactor.

The protein resides in the cytoplasm. It catalyses the reaction sn-glycerol 1-phosphate + NAD(+) = dihydroxyacetone phosphate + NADH + H(+). The catalysed reaction is sn-glycerol 1-phosphate + NADP(+) = dihydroxyacetone phosphate + NADPH + H(+). It functions in the pathway membrane lipid metabolism; glycerophospholipid metabolism. Functionally, catalyzes the NAD(P)H-dependent reduction of dihydroxyacetonephosphate (DHAP or glycerone phosphate) to glycerol 1-phosphate (G1P). The G1P thus generated is used as the glycerophosphate backbone of phospholipids in the cellular membranes of Archaea. The sequence is that of Glycerol-1-phosphate dehydrogenase [NAD(P)+] from Methanothrix thermoacetophila (strain DSM 6194 / JCM 14653 / NBRC 101360 / PT) (Methanosaeta thermophila).